The following is a 109-amino-acid chain: Larval cuticle protein 1 (109 aa).

An N-terminal signal peptide occupies residues 1–14; the sequence is MILVALALVALAVA. The Chitin-binding type R&amp;R domain occupies 34-107; sequence EGSYQFGFET…AEGSSIPKPA (74 aa).

Functionally, component of the cuticle of the larva of Helicoverpa armigera. This chain is Larval cuticle protein 1 (LCP1), found in Helicoverpa armigera (Cotton bollworm).